A 566-amino-acid polypeptide reads, in one-letter code: Proline--tRNA ligase (566 aa).

It belongs to the class-II aminoacyl-tRNA synthetase family. ProS type 1 subfamily. In terms of assembly, homodimer.

The protein localises to the cytoplasm. The enzyme catalyses tRNA(Pro) + L-proline + ATP = L-prolyl-tRNA(Pro) + AMP + diphosphate. In terms of biological role, catalyzes the attachment of proline to tRNA(Pro) in a two-step reaction: proline is first activated by ATP to form Pro-AMP and then transferred to the acceptor end of tRNA(Pro). As ProRS can inadvertently accommodate and process non-cognate amino acids such as alanine and cysteine, to avoid such errors it has two additional distinct editing activities against alanine. One activity is designated as 'pretransfer' editing and involves the tRNA(Pro)-independent hydrolysis of activated Ala-AMP. The other activity is designated 'posttransfer' editing and involves deacylation of mischarged Ala-tRNA(Pro). The misacylated Cys-tRNA(Pro) is not edited by ProRS. The sequence is that of Proline--tRNA ligase from Bacillus mycoides (strain KBAB4) (Bacillus weihenstephanensis).